An 87-amino-acid chain; its full sequence is Small ribosomal subunit protein uS15 (87 aa).

Residues Met-1–Asp-19 show a composition bias toward basic and acidic residues. The segment at Met-1–Pro-23 is disordered.

The protein belongs to the universal ribosomal protein uS15 family. In terms of assembly, part of the 30S ribosomal subunit. Forms a bridge to the 50S subunit in the 70S ribosome, contacting the 23S rRNA.

Its function is as follows. One of the primary rRNA binding proteins, it binds directly to 16S rRNA where it helps nucleate assembly of the platform of the 30S subunit by binding and bridging several RNA helices of the 16S rRNA. In terms of biological role, forms an intersubunit bridge (bridge B4) with the 23S rRNA of the 50S subunit in the ribosome. The protein is Small ribosomal subunit protein uS15 of Clostridium botulinum (strain Loch Maree / Type A3).